We begin with the raw amino-acid sequence, 298 residues long: Zinc import ATP-binding protein ZnuC (298 aa).

An ABC transporter domain is found at 17–232 (IELRNAGVYR…PEYVRLFGSR (216 aa)). 49-56 (GQNGAGKS) serves as a coordination point for ATP. Residues 273–298 (RGHCHVEDGHHHDHEHHHHEGGQPRA) are disordered. Residues 276-298 (CHVEDGHHHDHEHHHHEGGQPRA) show a composition bias toward basic and acidic residues.

Belongs to the ABC transporter superfamily. Zinc importer (TC 3.A.1.15.5) family. As to quaternary structure, the complex is composed of two ATP-binding proteins (ZnuC), two transmembrane proteins (ZnuB) and a solute-binding protein (ZnuA).

Its subcellular location is the cell inner membrane. It carries out the reaction Zn(2+)(out) + ATP(in) + H2O(in) = Zn(2+)(in) + ADP(in) + phosphate(in) + H(+)(in). In terms of biological role, part of the ABC transporter complex ZnuABC involved in zinc import. Responsible for energy coupling to the transport system. The protein is Zinc import ATP-binding protein ZnuC of Brucella melitensis biotype 1 (strain ATCC 23456 / CCUG 17765 / NCTC 10094 / 16M).